Consider the following 269-residue polypeptide: MAAPAGAGALIASPDRRRCLWSVLAAALGLLTYGVSALEVYTPKEIFVANGTQGKLTCKFKSTNTTGTLTSVSWSFQPEGTDTTVSFFHYSQGQVYAGNYPPFKDRVSWAGDLDKKDASINIENMQFIHNGTYICDVKNPPDIVVQPGHIRLYVVEKEILPAFPVWVVVGIVTAVVLGLTLLITMILAVIYRRRNSKRDYAGCNTSENVSPVKQVSRKSPSDTEGLVKSLPSGSHQGPVIYAQLDHSGGHHSDRINKSESVVYADIRKN.

The signal sequence occupies residues 1-35; sequence MAAPAGAGALIASPDRRRCLWSVLAAALGLLTYGV. The region spanning 36-146 is the Ig-like V-type domain; the sequence is SALEVYTPKE…VKNPPDIVVQ (111 aa). At 36 to 162 the chain is on the extracellular side; that stretch reads SALEVYTPKE…YVVEKEILPA (127 aa). N-linked (GlcNAc...) asparagine glycans are attached at residues asparagine 50, asparagine 64, and asparagine 130. Cysteine 58 and cysteine 135 form a disulfide bridge. Residues 163–183 traverse the membrane as a helical segment; the sequence is FPVWVVVGIVTAVVLGLTLLI. The Cytoplasmic segment spans residues 184 to 269; the sequence is TMILAVIYRR…SVVYADIRKN (86 aa). Residues 202 to 238 form a disordered region; it reads GCNTSENVSPVKQVSRKSPSDTEGLVKSLPSGSHQGP. Positions 203 to 213 are enriched in polar residues; it reads CNTSENVSPVK. Residues serine 206, serine 210, serine 219, and serine 221 each carry the phosphoserine modification. Positions 239-244 match the ITIM motif 1 motif; sequence VIYAQL. Position 241 is a phosphotyrosine (tyrosine 241). At serine 260 the chain carries Phosphoserine. Positions 261 to 266 match the ITIM motif 2 motif; it reads VVYADI. Tyrosine 263 bears the Phosphotyrosine mark.

It belongs to the myelin P0 protein family. In terms of assembly, interacts with phosphorylated PTPN11/SHP-2. Phosphorylated on tyrosine residues upon stimulation with pervanadate and concanavalin-A (ConA). Phosphorylation at Tyr-241 and Tyr-263 is required for interaction with PTPN11/SHP-2. Dephosphorylated by PTPN11/SHP-2 (in vitro). In terms of processing, N-glycosylated.

Its subcellular location is the membrane. In terms of biological role, cell surface receptor, which is involved in signal transduction processes. Recruits PTPN11/SHP-2 to the cell membrane and is a putative substrate of PTPN11/SHP-2. Is a major receptor for concanavalin-A (ConA) and is involved in cellular signaling induced by ConA, which probably includes Src family tyrosine-protein kinases. May be involved in regulation of integrin-mediated cell motility. This is Myelin protein zero-like protein 1 (MPZL1) from Bos taurus (Bovine).